The sequence spans 800 residues: Nuclear poly(A) polymerase 2 (800 aa).

Residues 103 to 105 (FGS), 115 to 118 (ADID), aspartate 171, lysine 232, tyrosine 241, and 250 to 251 (GV) contribute to the ATP site. Positions 116, 118, and 171 each coordinate Mg(2+). 2 short sequence motifs (nuclear localization signal) span residues 487–494 (RRRQLPSF) and 533–540 (KRKNDDEI). Positions 497 to 576 (PNGYKRSRQS…SGITTSGTPQ (80 aa)) are disordered. The span at 527 to 538 (SVERYAKRKNDD) shows a compositional bias: basic and acidic residues. The segment covering 564–575 (PDSSGITTSGTP) has biased composition (polar residues).

This sequence belongs to the poly(A) polymerase family. Monomer. Forms a complex with cleavage and polyadenylation specificity factor (CPSF) subunits CPSF100, CPSF30, FIPS5 and PABN2. It depends on Mg(2+) as a cofactor. Mn(2+) is required as a cofactor. In terms of tissue distribution, mostly expressed in flowers (highly in the style, receptacle and pedicel, but weakly in the vasculature of sepals) and hypocotyls, and, to a lower extent, in roots and stems. Barely detected in leaves (petioles and vascular system).

The protein resides in the nucleus. Its subcellular location is the cytoplasm. The enzyme catalyses RNA(n) + ATP = RNA(n)-3'-adenine ribonucleotide + diphosphate. Functionally, essential protein. Polymerase that creates the 3'-poly(A) tail of mRNA's. Also required for the endoribonucleolytic cleavage reaction at some polyadenylation sites. May acquire specificity through interaction with a cleavage and polyadenylation specificity factor (CPSF) at its C-terminus. Mediates the polyadenylation of RNAs that are associated with polynucleotide phosphorylase (e.g. PNP1). In Arabidopsis thaliana (Mouse-ear cress), this protein is Nuclear poly(A) polymerase 2.